Reading from the N-terminus, the 583-residue chain is Arginine--tRNA ligase (583 aa).

The 'HIGH' region signature appears at 131–141; it reads ANPTGPMHVGH.

This sequence belongs to the class-I aminoacyl-tRNA synthetase family. Monomer.

The protein localises to the cytoplasm. It catalyses the reaction tRNA(Arg) + L-arginine + ATP = L-arginyl-tRNA(Arg) + AMP + diphosphate. The polypeptide is Arginine--tRNA ligase (Parvibaculum lavamentivorans (strain DS-1 / DSM 13023 / NCIMB 13966)).